Here is a 280-residue protein sequence, read N- to C-terminus: Ribonuclease Z (280 aa).

Residues His-61, His-63, Asp-65, His-66, His-153, Asp-176, and His-240 each coordinate Zn(2+). Asp-65 (proton acceptor) is an active-site residue.

The protein belongs to the RNase Z family. As to quaternary structure, homodimer. Zn(2+) is required as a cofactor.

It carries out the reaction Endonucleolytic cleavage of RNA, removing extra 3' nucleotides from tRNA precursor, generating 3' termini of tRNAs. A 3'-hydroxy group is left at the tRNA terminus and a 5'-phosphoryl group is left at the trailer molecule.. Zinc phosphodiesterase, which displays some tRNA 3'-processing endonuclease activity. Probably involved in tRNA maturation, by removing a 3'-trailer from precursor tRNA. This Mycobacterium bovis (strain BCG / Pasteur 1173P2) protein is Ribonuclease Z.